Reading from the N-terminus, the 288-residue chain is Rhox homeobox family member 2B (288 aa).

The tract at residues Ser16–Pro136 is disordered. Over residues Val39–Pro48 the composition is skewed to acidic residues. A compositionally biased stretch (basic and acidic residues) spans Gly68–Gly80. A DNA-binding region (homeobox) is located at residues Gln134–Gln193. Positions Arg186 to Ala195 match the Nuclear localization signal motif.

Belongs to the paired-like homeobox family. PEPP subfamily. Expressed in testis, mainly expressed in germ cells, but also detected in somatic cells such as Sertoli cells, Leydig cells and peritubular cells.

It is found in the nucleus. Its function is as follows. Transcription factor maybe involved in reproductive processes. Modulates expression of target genes encoding proteins involved in processes relevant to spermatogenesis. In Homo sapiens (Human), this protein is Rhox homeobox family member 2B.